The primary structure comprises 43 residues: Protein PsbN (43 aa).

The chain crosses the membrane as a helical span at residues 5–27; sequence TLVTISISCLLVSFTGYALYTAF.

This sequence belongs to the PsbN family.

It localises to the plastid. Its subcellular location is the chloroplast thylakoid membrane. May play a role in photosystem I and II biogenesis. In Pinus koraiensis (Korean pine), this protein is Protein PsbN.